The sequence spans 268 residues: Tryptophan synthase alpha chain (268 aa).

Residues Glu49 and Asp60 each act as proton acceptor in the active site.

It belongs to the TrpA family. In terms of assembly, tetramer of two alpha and two beta chains.

The enzyme catalyses (1S,2R)-1-C-(indol-3-yl)glycerol 3-phosphate + L-serine = D-glyceraldehyde 3-phosphate + L-tryptophan + H2O. It participates in amino-acid biosynthesis; L-tryptophan biosynthesis; L-tryptophan from chorismate: step 5/5. In terms of biological role, the alpha subunit is responsible for the aldol cleavage of indoleglycerol phosphate to indole and glyceraldehyde 3-phosphate. The polypeptide is Tryptophan synthase alpha chain (Pseudomonas aeruginosa (strain UCBPP-PA14)).